Reading from the N-terminus, the 363-residue chain is tRNA(Met) cytidine acetate ligase (363 aa).

ATP is bound by residues 7–20 (IAEF…HKYL), glycine 96, asparagine 152, and arginine 175.

This sequence belongs to the TmcAL family.

The protein localises to the cytoplasm. It carries out the reaction cytidine(34) in elongator tRNA(Met) + acetate + ATP = N(4)-acetylcytidine(34) in elongator tRNA(Met) + AMP + diphosphate. In terms of biological role, catalyzes the formation of N(4)-acetylcytidine (ac(4)C) at the wobble position of elongator tRNA(Met), using acetate and ATP as substrates. First activates an acetate ion to form acetyladenylate (Ac-AMP) and then transfers the acetyl group to tRNA to form ac(4)C34. This is tRNA(Met) cytidine acetate ligase from Streptococcus gordonii (strain Challis / ATCC 35105 / BCRC 15272 / CH1 / DL1 / V288).